A 137-amino-acid polypeptide reads, in one-letter code: Large ribosomal subunit protein uL16 (137 aa).

The protein belongs to the universal ribosomal protein uL16 family. As to quaternary structure, part of the 50S ribosomal subunit.

Its function is as follows. Binds 23S rRNA and is also seen to make contacts with the A and possibly P site tRNAs. The polypeptide is Large ribosomal subunit protein uL16 (Acinetobacter baylyi (strain ATCC 33305 / BD413 / ADP1)).